Consider the following 314-residue polypeptide: Acetyl-coenzyme A carboxylase carboxyl transferase subunit beta (314 aa).

In terms of domain architecture, CoA carboxyltransferase N-terminal spans 25-294; it reads VWTKCDSCSQ…PGTKPIVAEF (270 aa). 4 residues coordinate Zn(2+): Cys29, Cys32, Cys48, and Cys51. The segment at 29–51 adopts a C4-type zinc-finger fold; sequence CDSCSQVLYRAELERNLEVCPKC.

This sequence belongs to the AccD/PCCB family. Acetyl-CoA carboxylase is a heterohexamer composed of biotin carboxyl carrier protein (AccB), biotin carboxylase (AccC) and two subunits each of ACCase subunit alpha (AccA) and ACCase subunit beta (AccD). Zn(2+) serves as cofactor.

Its subcellular location is the cytoplasm. The enzyme catalyses N(6)-carboxybiotinyl-L-lysyl-[protein] + acetyl-CoA = N(6)-biotinyl-L-lysyl-[protein] + malonyl-CoA. It participates in lipid metabolism; malonyl-CoA biosynthesis; malonyl-CoA from acetyl-CoA: step 1/1. Component of the acetyl coenzyme A carboxylase (ACC) complex. Biotin carboxylase (BC) catalyzes the carboxylation of biotin on its carrier protein (BCCP) and then the CO(2) group is transferred by the transcarboxylase to acetyl-CoA to form malonyl-CoA. In Photorhabdus laumondii subsp. laumondii (strain DSM 15139 / CIP 105565 / TT01) (Photorhabdus luminescens subsp. laumondii), this protein is Acetyl-coenzyme A carboxylase carboxyl transferase subunit beta.